The chain runs to 99 residues: Small ribosomal subunit protein uS14 (99 aa).

Belongs to the universal ribosomal protein uS14 family. Part of the 30S ribosomal subunit. Contacts proteins S3 and S10.

Functionally, binds 16S rRNA, required for the assembly of 30S particles and may also be responsible for determining the conformation of the 16S rRNA at the A site. This chain is Small ribosomal subunit protein uS14, found in Bacteroides fragilis (strain ATCC 25285 / DSM 2151 / CCUG 4856 / JCM 11019 / LMG 10263 / NCTC 9343 / Onslow / VPI 2553 / EN-2).